The primary structure comprises 361 residues: MDAEKMLEIDGSYLEGGGQALRNALSLSCILGKPVRVVKIRASRPSPGLSHQHLHGLNLLRDITNADVVGNYLLSSTVEFTPRTILDNTYRVETHTAASITLIYQMALPVLLFAGRPSRLIVSGGTNVDFAPPVEYMQEVLLPNLKHFGVSFDLKVQRYGFYPRGQGRCQLDVQPVTKLNSGKLVAFGRIKSVSGVAYCAGRLPVNIAIDMQQTAQREIHRLWPSQQCSIEPIKHSRQKAFHNGAGILMTVNTTSDVVLGASALGKKRIDGHVLGSEASCQLGDYMRKQVCVDDYMQDQLIIYMALAVGRSTMRTGKLTNHTRTAINVAEQMTGVKFDVAMEPGGQMLVSCKGLGHVNKLI.

Residues Q105, P132, Y295, D298, Q299, and H321 each contribute to the ATP site. Catalysis depends on H321, which acts as the Tele-AMP-histidine intermediate.

The protein belongs to the RNA 3'-terminal cyclase family. Type 1 subfamily.

It localises to the nucleus. Its subcellular location is the nucleoplasm. It carries out the reaction a 3'-end 3'-phospho-ribonucleotide-RNA + ATP = a 3'-end 2',3'-cyclophospho-ribonucleotide-RNA + AMP + diphosphate. Its function is as follows. Catalyzes the conversion of 3'-phosphate to a 2',3'-cyclic phosphodiester at the end of RNA. The mechanism of action of the enzyme occurs in 3 steps: (A) adenylation of the enzyme by ATP; (B) transfer of adenylate to an RNA-N3'P to produce RNA-N3'PP5'A; (C) and attack of the adjacent 2'-hydroxyl on the 3'-phosphorus in the diester linkage to produce the cyclic end product. Likely functions in some aspects of cellular RNA processing. Function plays an important role in a RNA repair and splicing pathway which controls axon regeneration in response to peripheral (PNS) and central nervous system (CNS) injury. In response to axotomy, negatively regulates splicing of Xbp1 which in turn activates downstream effectors which inhibit axon regeneration, including down-regulating the microtubule regulators ringer and futsch. The protein is RNA 3'-terminal phosphate cyclase of Drosophila melanogaster (Fruit fly).